Reading from the N-terminus, the 421-residue chain is Gamma-glutamyl phosphate reductase (421 aa).

This sequence belongs to the gamma-glutamyl phosphate reductase family.

The protein resides in the cytoplasm. The catalysed reaction is L-glutamate 5-semialdehyde + phosphate + NADP(+) = L-glutamyl 5-phosphate + NADPH + H(+). The protein operates within amino-acid biosynthesis; L-proline biosynthesis; L-glutamate 5-semialdehyde from L-glutamate: step 2/2. Functionally, catalyzes the NADPH-dependent reduction of L-glutamate 5-phosphate into L-glutamate 5-semialdehyde and phosphate. The product spontaneously undergoes cyclization to form 1-pyrroline-5-carboxylate. The polypeptide is Gamma-glutamyl phosphate reductase (Nitrosospira multiformis (strain ATCC 25196 / NCIMB 11849 / C 71)).